A 578-amino-acid polypeptide reads, in one-letter code: Suppressor of smlA (578 aa).

In terms of biological role, involved in regulation of group size of aggregation streams. The protein is Suppressor of smlA (sslA1) of Dictyostelium discoideum (Social amoeba).